Here is a 606-residue protein sequence, read N- to C-terminus: Zinc finger protein 652 (606 aa).

Ser-57 bears the Phosphoserine mark. Positions 71-97 are enriched in basic and acidic residues; sequence HLHETEEQPYFRETRAVSDVHAVKEDR. 2 disordered regions span residues 71–113 and 130–235; these read HLHE…VSYK and VSKG…APVQ. Residues 98–109 show a composition bias toward acidic residues; sequence ENSDDTEEEEEE. The residue at position 100 (Ser-100) is a Phosphoserine. Thr-103 bears the Phosphothreonine mark. The span at 137–149 shows a compositional bias: polar residues; that stretch reads VSSQSKETPVLKT. Positions 152-170 are enriched in acidic residues; the sequence is EEEEEESEEEATDDSNDYG. Residues 171–183 are compositionally biased toward basic and acidic residues; it reads ENEKQKKKEKIVE. Positions 184 to 209 are enriched in low complexity; that stretch reads KVSVTQRRTRRAASVAAATTSPTPRT. A phosphoserine mark is found at Ser-197 and Ser-204. The C2H2-type 1 zinc-finger motif lies at 245–268; the sequence is LTCEKCPRVFNTRWYLEKHMNVTH. The segment at 272–294 adopts a C2H2-type 2; degenerate zinc-finger fold; that stretch reads QICDKCGKKFVLESELSLHQQTD. 6 C2H2-type zinc fingers span residues 299-322, 329-351, 357-379, 385-407, 413-435, and 441-463; these read IQCVSCNKSFKKLWSLHEHIKIVH, FSCEICEKKFYTMAHVRKHMVAH, FTCETCGKSFKRSMSLKVHSLQH, FRCENCDERFQYKYQLRSHMSIH, FMCQWCGKDFNMKQYFDEHMKTH, and FICEICGKSFTSRPNMKRHRRTH. The C2H2-type 9; degenerate zinc-finger motif lies at 469–492; sequence YPCDVCGQRFRFSNMLKAHKEKCF. The tract at residues 498-606 is mediates interaction with CBFA2T3; the sequence is VNVPPAVQIP…AEKNSSAQHH (109 aa).

Belongs to the krueppel C2H2-type zinc-finger protein family. Interacts with CBFA2T3. As to expression, widely expressed with higher expression in breast, prostate, vulva and pancreas.

The protein localises to the nucleus. Its function is as follows. Functions as a transcriptional repressor. This chain is Zinc finger protein 652 (ZNF652), found in Homo sapiens (Human).